A 528-amino-acid polypeptide reads, in one-letter code: Probable rhamnogalacturonate lyase A (528 aa).

Residues 1–20 (MLSKATLLLSLPFWARVANA) form the signal peptide. N-linked (GlcNAc...) asparagine glycosylation is present at Asn46. 2 cysteine pairs are disulfide-bonded: Cys50–Cys93 and Cys184–Cys193. An N-linked (GlcNAc...) asparagine glycan is attached at Asn351.

Belongs to the polysaccharide lyase 4 family.

It localises to the secreted. It catalyses the reaction Endotype eliminative cleavage of L-alpha-rhamnopyranosyl-(1-&gt;4)-alpha-D-galactopyranosyluronic acid bonds of rhamnogalacturonan I domains in ramified hairy regions of pectin leaving L-rhamnopyranose at the reducing end and 4-deoxy-4,5-unsaturated D-galactopyranosyluronic acid at the non-reducing end.. Functionally, pectinolytic enzymes consist of four classes of enzymes: pectin lyase, polygalacturonase, pectin methylesterase and rhamnogalacturonase. Degrades the rhamnogalacturonan I (RG-I) backbone of pectin. The sequence is that of Probable rhamnogalacturonate lyase A (rglA) from Neosartorya fischeri (strain ATCC 1020 / DSM 3700 / CBS 544.65 / FGSC A1164 / JCM 1740 / NRRL 181 / WB 181) (Aspergillus fischerianus).